The chain runs to 388 residues: Chaperone protein DnaJ (388 aa).

Residues 5 to 69 form the J domain; sequence DYYDVLGVDK…QKKAQYDQFG (65 aa). The CR-type zinc finger occupies 145–227; it reads GKKTDITYTR…CHGKGTIDKK (83 aa). Residues Cys158, Cys161, Cys175, Cys178, Cys201, Cys204, Cys215, and Cys218 each coordinate Zn(2+). CXXCXGXG motif repeat units follow at residues 158–165, 175–182, 201–208, and 215–222; these read CPTCDGSG, CDKCHGTG, CDKCGGRG, and CQTCHGKG.

The protein belongs to the DnaJ family. In terms of assembly, homodimer. The cofactor is Zn(2+).

The protein localises to the cytoplasm. Its function is as follows. Participates actively in the response to hyperosmotic and heat shock by preventing the aggregation of stress-denatured proteins and by disaggregating proteins, also in an autonomous, DnaK-independent fashion. Unfolded proteins bind initially to DnaJ; upon interaction with the DnaJ-bound protein, DnaK hydrolyzes its bound ATP, resulting in the formation of a stable complex. GrpE releases ADP from DnaK; ATP binding to DnaK triggers the release of the substrate protein, thus completing the reaction cycle. Several rounds of ATP-dependent interactions between DnaJ, DnaK and GrpE are required for fully efficient folding. Also involved, together with DnaK and GrpE, in the DNA replication of plasmids through activation of initiation proteins. This is Chaperone protein DnaJ from Lactobacillus gasseri (strain ATCC 33323 / DSM 20243 / BCRC 14619 / CIP 102991 / JCM 1131 / KCTC 3163 / NCIMB 11718 / NCTC 13722 / AM63).